Consider the following 940-residue polypeptide: Isoleucine--tRNA ligase (940 aa).

The short motif at 58–68 is the 'HIGH' region element; it reads PYANGSIHIGH. E564 lines the L-isoleucyl-5'-AMP pocket. A 'KMSKS' region motif is present at residues 605–609; it reads KMSKS. Residue K608 coordinates ATP. Positions 903, 906, 923, and 926 each coordinate Zn(2+).

This sequence belongs to the class-I aminoacyl-tRNA synthetase family. IleS type 1 subfamily. In terms of assembly, monomer. Zn(2+) is required as a cofactor.

It is found in the cytoplasm. It carries out the reaction tRNA(Ile) + L-isoleucine + ATP = L-isoleucyl-tRNA(Ile) + AMP + diphosphate. Functionally, catalyzes the attachment of isoleucine to tRNA(Ile). As IleRS can inadvertently accommodate and process structurally similar amino acids such as valine, to avoid such errors it has two additional distinct tRNA(Ile)-dependent editing activities. One activity is designated as 'pretransfer' editing and involves the hydrolysis of activated Val-AMP. The other activity is designated 'posttransfer' editing and involves deacylation of mischarged Val-tRNA(Ile). This is Isoleucine--tRNA ligase from Shewanella baltica (strain OS185).